Reading from the N-terminus, the 166-residue chain is Thioredoxin, mitochondrial (166 aa).

Residues 1–59 (MAQRLLLRRFLTSVISRKPPQGVWASLTSTSLQTPPYNAGGLTGTPSPARTFHTTRVCS) constitute a mitochondrion transit peptide. The Thioredoxin domain occupies 61 to 166 (TFNVQDGPDF…LEAFLKKLIG (106 aa)). Residues Cys90 and Cys93 each act as nucleophile in the active site. Cys90 and Cys93 are joined by a disulfide. N6-acetyllysine; alternate is present on Lys152. Lys152 is modified (N6-succinyllysine; alternate).

This sequence belongs to the thioredoxin family. Monomer. In terms of tissue distribution, expressed in several tissues with the highest expression levels in heart, muscle, kidney and adrenal gland.

It is found in the mitochondrion. Important for the control of mitochondrial reactive oxygen species homeostasis, apoptosis regulation and cell viability. Is involved in various redox reactions including the reduction of protein disulfide bonds, through the reversible oxidation of its active center dithiol to a disulfide. This Rattus norvegicus (Rat) protein is Thioredoxin, mitochondrial (Txn2).